Here is a 482-residue protein sequence, read N- to C-terminus: Cytochrome P450 monooxygenase pynD (482 aa).

Positions 1–22 (MWRIPVIVALVAGLLYWVRKQG) are cleaved as a signal peptide. The N-linked (GlcNAc...) asparagine glycan is linked to Asn-401. A heme-binding site is contributed by Cys-417.

This sequence belongs to the cytochrome P450 family. The cofactor is heme.

It functions in the pathway secondary metabolite biosynthesis. Cytochrome P450 monooxygenase; part of the gene cluster that mediates the biosynthesis of pyranonigrins, a family of antioxidative compounds. The first step of pyranonigrins biosynthesis is performed by the hybrid PKS-NRPS synthetase that condenses 6 malonyl-CoA units to an acetyl starter unit, to form a 1,3,5-trioxotetradecane-6,8-dienyl-ACP. The enoyl reductase (ER) domain of pynA is likely to be functional during the first two rounds of polyketide chain extension, to generate the saturated C-C bonds of the alkyl side chain. PynA subsequently forms the amide bond between the acyl chain and L-serine. Although pynA has a terminal reductase domain, it appears to require the thioesterase pynI for the release of the straight-chain intermediate from pynA via the formation of a tetramic acid pyranonigrin J. The methyltransferase pynC then coverts pyranonigrin J to pyranonigrin I via N-methylation. The FAD-dependent monooxygenase pynG catalyzes an epoxidation-mediated cyclization to form the dihydro-gamma-pyrone moiety, followed by pynD-catalyzed oxidation of the alcohol to the ketone and enolization to yield the characteristic tetramic acid-fused gamma-pyrone core of pyranonigrin H. Pyranonigrin H is substrate of pynH for dehydration-mediated exo-methylene formation from the serine side chain to produce pyranonigrin E, before the oxidase pynE reduces the exo-methylene of pyranonigrin E into a pendant methyl to form pyranonigrin G. The FAD-linked oxidoreductase pynB performs the reverse reaction and converts pyranonigrin G back to pyranonigrin E. The protein is Cytochrome P450 monooxygenase pynD of Aspergillus niger (strain ATCC MYA-4892 / CBS 513.88 / FGSC A1513).